Reading from the N-terminus, the 585-residue chain is Testis-specific serine kinase substrate (585 aa).

The segment covering 91 to 108 (EPDSSGTDSTTEDSGPLA) has biased composition (low complexity). The segment at 91–125 (EPDSSGTDSTTEDSGPLALPGPPASPTTPWAPEDP) is disordered. S224 bears the Phosphoserine mark. Disordered regions lie at residues 264–312 (HGLS…SEQE) and 559–585 (LEGS…GSEQ). S281 carries the phosphoserine; by TSSK1 and TSSK2 modification. S309 bears the Phosphoserine mark.

Phosphorylated on serine residue(s) by STK22A/TSSK1 and STK22B/TSSK2. As to expression, testis specific.

It localises to the cytoplasm. The protein localises to the cytoskeleton. Its subcellular location is the microtubule organizing center. It is found in the centrosome. The protein resides in the centriole. It localises to the cytoplasmic vesicle. The protein localises to the secretory vesicle. Its subcellular location is the acrosome. May play a role in testicular physiology, most probably in the process of spermatogenesis or spermatid development. The chain is Testis-specific serine kinase substrate (Tsks) from Mus musculus (Mouse).